A 224-amino-acid polypeptide reads, in one-letter code: Elongation factor Ts (224 aa).

The segment at 81-84 is involved in Mg(2+) ion dislocation from EF-Tu; the sequence is TDFV.

The protein belongs to the EF-Ts family.

It localises to the cytoplasm. Functionally, associates with the EF-Tu.GDP complex and induces the exchange of GDP to GTP. It remains bound to the aminoacyl-tRNA.EF-Tu.GTP complex up to the GTP hydrolysis stage on the ribosome. The protein is Elongation factor Ts of Finegoldia magna (strain ATCC 29328 / DSM 20472 / WAL 2508) (Peptostreptococcus magnus).